Here is a 243-residue protein sequence, read N- to C-terminus: Probable transcriptional regulatory protein BPP2422 (243 aa).

The segment at 1–21 is disordered; sequence MAGHSKWANIQHRKGRQDAKR.

This sequence belongs to the TACO1 family.

It is found in the cytoplasm. The chain is Probable transcriptional regulatory protein BPP2422 from Bordetella parapertussis (strain 12822 / ATCC BAA-587 / NCTC 13253).